A 357-amino-acid chain; its full sequence is Histidine biosynthesis bifunctional protein HisB (357 aa).

Residues 1–168 (MTPILFIDRD…GIAHALADAP (168 aa)) form a histidinol-phosphatase region. The active-site Nucleophile is aspartate 8. Residues aspartate 8, aspartate 10, and aspartate 128 each coordinate Mg(2+). Aspartate 10 serves as the catalytic Proton donor. Positions 169–357 (RTAVVQRDTK…TALPSTKGAL (189 aa)) are imidazoleglycerol-phosphate dehydratase.

This sequence in the N-terminal section; belongs to the histidinol-phosphatase family. In the C-terminal section; belongs to the imidazoleglycerol-phosphate dehydratase family. Requires Mg(2+) as cofactor.

The protein resides in the cytoplasm. The catalysed reaction is D-erythro-1-(imidazol-4-yl)glycerol 3-phosphate = 3-(imidazol-4-yl)-2-oxopropyl phosphate + H2O. It carries out the reaction L-histidinol phosphate + H2O = L-histidinol + phosphate. Its pathway is amino-acid biosynthesis; L-histidine biosynthesis; L-histidine from 5-phospho-alpha-D-ribose 1-diphosphate: step 6/9. It participates in amino-acid biosynthesis; L-histidine biosynthesis; L-histidine from 5-phospho-alpha-D-ribose 1-diphosphate: step 8/9. This Stenotrophomonas maltophilia (strain K279a) protein is Histidine biosynthesis bifunctional protein HisB.